The primary structure comprises 2395 residues: Centrosomal protein of 295 kDa (2395 aa).

The interval 1-540 (MKRKVMNGKL…KQADHLEVRP (540 aa)) is necessary for centriole targeting and microtubule association. At serine 13 the chain carries Phosphoserine. 5 coiled-coil regions span residues 53-84 (QRRNQQVSHLAEELRAEWEEAQSQKIQNLEKL), 114-148 (AERKTKAEARHKEALKAQKKQKEMLMKQKTRHIKA), 209-277 (DAHL…KRQT), 488-538 (ARHK…HLEV), and 567-592 (QQNRLHKQTVETARKRLLEYQTVLKE). 3 disordered regions span residues 602-643 (LIPD…PVQP), 660-681 (GHIPQRQGETARAKQSVESQER), and 735-764 (SDSQQISSEDSENISSKPTEPSSSLPLMPE). Phosphoserine is present on serine 634. Positions 735-750 (SDSQQISSEDSENISS) are enriched in low complexity. Residues 817–848 (GQLELQKKVLQERQEAQEKLLSCTQKELEEQT) are a coiled coil. Disordered stretches follow at residues 864–893 (SLPSASAESGNIQTSSTKSDATVSSDSMDN), 966–986 (ADTQSRKIQKPPLPTNKKGLL), and 1212–1272 (VDPE…SKVT). The segment covering 1219-1250 (FQFSPQTQENRSSQQTGFSSFTPSLRQPSCVS) has biased composition (polar residues). Residues 1444 to 1488 (HDDLQALQQQLDVHREAIRSCQDIQEELLLQRLNKLEQRVSSKQI) adopt a coiled-coil conformation. Phosphoserine is present on serine 1565. Low complexity predominate over residues 1677 to 1692 (PWGDSSQGSSSGDQPG). 5 disordered regions span residues 1677-1715 (PWGDSSQGSSSGDQPGAAAVHAEHSGESLGKELSGRASK), 1819-1845 (SEEEEEEEACTNLSPLMKPDDEVETQE), 1875-1899 (ESFSEQTEHQEQESSSKEEETGSLS), 1989-2013 (DLSSPGTSQEDRDFYQQNSESSSEK), and 2354-2395 (NKTP…SQCI). Basic and acidic residues predominate over residues 1697–1710 (HAEHSGESLGKELS). Residues 1880–1894 (QTEHQEQESSSKEEE) show a composition bias toward basic and acidic residues. The tract at residues 2329–2395 (SLGEAFMKRK…TAKRNRSQCI (67 aa)) is ALMS motif. A compositionally biased stretch (basic and acidic residues) spans 2376-2388 (HLKEAVSGDETAK).

As to quaternary structure, interacts (via ALMS motif) with microtubules; this interaction is direct.

It localises to the cytoplasm. Its subcellular location is the cytoskeleton. The protein localises to the microtubule organizing center. It is found in the centrosome. The protein resides in the centriole. It localises to the spindle. Functionally, centriole-enriched microtubule-binding protein involved in centriole biogenesis. Essential for the generation of the distal portion of new-born centrioles in a CPAP- and CEP120-mediated elongation dependent manner during the cell cycle S/G2 phase after formation of the initiating cartwheel structure. Required for the recruitment of centriolar proteins, such as POC1B, POC5 and CEP135, into the distal portion of centrioles. Also required for centriole-to-centrosome conversion during mitotic progression, but is dispensable for cartwheel removal or centriole disengagement. Binds to and stabilizes centriolar microtubule. May be involved in ciliogenesis. The chain is Centrosomal protein of 295 kDa from Rattus norvegicus (Rat).